Here is a 342-residue protein sequence, read N- to C-terminus: Probable receptor-like protein kinase At4g10390 (342 aa).

One can recognise a Protein kinase domain in the interval 41-336; that stretch reads SNFSRLIGSG…IKEIPSLSFL (296 aa). ATP is bound by residues 47 to 55 and K69; that span reads IGSGGYSSI. Catalysis depends on D165, which acts as the Proton acceptor. Phosphoserine occurs at positions 169 and 201. Y220 bears the Phosphotyrosine mark.

Belongs to the protein kinase superfamily. Ser/Thr protein kinase family.

It catalyses the reaction L-seryl-[protein] + ATP = O-phospho-L-seryl-[protein] + ADP + H(+). The enzyme catalyses L-threonyl-[protein] + ATP = O-phospho-L-threonyl-[protein] + ADP + H(+). This chain is Probable receptor-like protein kinase At4g10390, found in Arabidopsis thaliana (Mouse-ear cress).